The primary structure comprises 240 residues: Glutathione-independent glyoxalase hsp3102 (240 aa).

Catalysis depends on residues Cys-141, His-142, and Glu-175.

It belongs to the peptidase C56 family. HSP31-like subfamily.

Its subcellular location is the cytoplasm. It localises to the nucleus. The enzyme catalyses methylglyoxal + H2O = (R)-lactate + H(+). Catalyzes the conversion of methylglyoxal (MG) to D-lactate in a single glutathione (GSH)-independent step. May play a role in detoxifying endogenously produced glyoxals. Involved in protection against reactive oxygen species (ROS). In Schizosaccharomyces pombe (strain 972 / ATCC 24843) (Fission yeast), this protein is Glutathione-independent glyoxalase hsp3102.